Here is a 138-residue protein sequence, read N- to C-terminus: Ribosome-binding factor A (138 aa).

The tract at residues 119 to 138 (RSPEVQRDLGPSNEKDDEQN) is disordered.

It belongs to the RbfA family. Monomer. Binds 30S ribosomal subunits, but not 50S ribosomal subunits or 70S ribosomes.

It is found in the cytoplasm. Its function is as follows. One of several proteins that assist in the late maturation steps of the functional core of the 30S ribosomal subunit. Associates with free 30S ribosomal subunits (but not with 30S subunits that are part of 70S ribosomes or polysomes). Required for efficient processing of 16S rRNA. May interact with the 5'-terminal helix region of 16S rRNA. This Agrobacterium fabrum (strain C58 / ATCC 33970) (Agrobacterium tumefaciens (strain C58)) protein is Ribosome-binding factor A.